A 129-amino-acid chain; its full sequence is uncharacterized protein (129 aa).

A helical membrane pass occupies residues 46–66; it reads FFHFFFSFLLHLISPAVTGGI.

The protein resides in the membrane. This is an uncharacterized protein from Saccharomyces cerevisiae (strain ATCC 204508 / S288c) (Baker's yeast).